The chain runs to 431 residues: F-box/kelch-repeat protein At4g19930 (431 aa).

Residues 37–83 (HEPMPYIPFDLVIEILTRLPAKSLMRFKSVSKLWSSLICSRTFTNRL) enclose the F-box domain. Kelch repeat units lie at residues 143–189 (LSHV…KNKK) and 227–275 (WVFI…PMLV).

The polypeptide is F-box/kelch-repeat protein At4g19930 (Arabidopsis thaliana (Mouse-ear cress)).